The chain runs to 453 residues: Aspartic proteinase PCS1 (453 aa).

Residues 1 to 18 form the signal peptide; the sequence is MFSRFHALFLLLVLSVRT. Residues 19–57 constitute a propeptide, activation peptide; the sequence is YKCVSSSSSSSSSFSFSSFSSSSSSQTLVLPLKTRITPT. Residues asparagine 70 and asparagine 85 are each glycosylated (N-linked (GlcNAc...) asparagine). Residues 73 to 438 form the Peptidase A1 domain; it reads LTVTLTVGTP…DLQRSRIGLA (366 aa). The active site involves aspartate 91. Residues asparagine 102, asparagine 175, asparagine 178, and asparagine 243 are each glycosylated (N-linked (GlcNAc...) asparagine). Aspartate 304 is an active-site residue. Asparagine 326 and asparagine 395 each carry an N-linked (GlcNAc...) asparagine glycan.

The protein belongs to the peptidase A1 family. As to expression, expressed specifically in developing gametophytes and developing seeds.

It localises to the endoplasmic reticulum. Embryo-specific aspartic protease that limits programmed cell death during reproductive development. Possesses peptidase activity toward casein in vitro. The polypeptide is Aspartic proteinase PCS1 (PCS1) (Arabidopsis thaliana (Mouse-ear cress)).